A 174-amino-acid polypeptide reads, in one-letter code: Sarcoplasmic calcium-binding protein (174 aa).

Ser-1 is modified (N-acetylserine). EF-hand domains lie at 3-38 (LWVQKMKTYFNRIDFDKDGAITRKDFESMATRFAKE), 55-90 (GVWDKFLANVAGGKGIDQATFISSMKEKVKDPNAKA), 91-126 (VVEGPLPLFFRAVDTNEDNMISRDEYGIFFNMLGLN), and 125-160 (LNPDMAPASFDAIDTNNDGLLSQEEFVTAGSDFFIN). The Ca(2+) site is built by Asp-16, Asp-18, Asp-20, and Asp-27. Residues Asp-104, Asn-106, Asp-108, Met-110, Glu-115, Asp-138, Asn-140, Asp-142, and Glu-149 each contribute to the Ca(2+) site.

In terms of biological role, like parvalbumins, SCPs seem to be more abundant in fast contracting muscles, but no functional relationship can be established from this distribution. This is Sarcoplasmic calcium-binding protein from Perinereis vancaurica tetradentata (Sandworm).